We begin with the raw amino-acid sequence, 228 residues long: Hematopoietically-expressed homeobox protein hhex (228 aa).

Residues 117–176 (RKGGQVRFSNDQTIELEKKFETQKYLSPPERKRLAKMLQLSERQVKTWFQNRRAKWRRLK) constitute a DNA-binding region (homeobox). The segment at 175–228 (LKQENPPSTGKREAEDSDTRRLSDAAARARELESGASTDSEELLDIEDEHQFTL) is disordered. Positions 184–207 (GKREAEDSDTRRLSDAAARARELE) are enriched in basic and acidic residues. Residues 213-222 (DSEELLDIED) show a composition bias toward acidic residues.

In terms of tissue distribution, expressed in embryonic endothelial and blood lineages. From late-blastula stage, expression is restricted to the dorsal marginal region of the extraembryonic yolk syncytial layer (YSL). By the onset of gastrulation, expressed in the entire dorsal half of the YSL. Post-gastrulation, expression appears in both anterior and posterior lateral plate mesoderm by the 3-somite stage. Posteriorly, expression is in the intermediate cell mass (ICM), which contains both endothelial and blood precursors. Subsequently expressed in the developing endothelial cells including the endocardium until the onset of circulation (24 hpf) and disappears completely by 30 hpf, at which point expression is seen in the thyroid and liver primordia. Also expressed in the developing biliary tree and pancreas.

The protein resides in the nucleus. Recognizes the DNA sequence 5'-ATTAA-3'. Transcriptional repressor. Regulates the differentiation of both endothelial and blood cells. Plays a role in embryonic dorsoventral patterning by regulating bmp expression. May establish anterior identity. Functions in the embryo to regulate liver development. Functions extraembryonically to generate organ chirality. In Danio rerio (Zebrafish), this protein is Hematopoietically-expressed homeobox protein hhex.